The sequence spans 154 residues: NADPH-dependent 7-cyano-7-deazaguanine reductase (154 aa).

A compositionally biased stretch (polar residues) spans 1–13 (MSKTDVSGLSQLG). The tract at residues 1–24 (MSKTDVSGLSQLGRQVDAPTSPET) is disordered. C52 serves as the catalytic Thioimide intermediate. The active-site Proton donor is D59. Substrate is bound by residues 74 to 76 (VES) and 93 to 94 (HE).

It belongs to the GTP cyclohydrolase I family. QueF type 1 subfamily.

It localises to the cytoplasm. The catalysed reaction is 7-aminomethyl-7-carbaguanine + 2 NADP(+) = 7-cyano-7-deazaguanine + 2 NADPH + 3 H(+). Its pathway is tRNA modification; tRNA-queuosine biosynthesis. Functionally, catalyzes the NADPH-dependent reduction of 7-cyano-7-deazaguanine (preQ0) to 7-aminomethyl-7-deazaguanine (preQ1). This is NADPH-dependent 7-cyano-7-deazaguanine reductase from Allorhizobium ampelinum (strain ATCC BAA-846 / DSM 112012 / S4) (Agrobacterium vitis (strain S4)).